Reading from the N-terminus, the 975-residue chain is Probable dipeptidyl-aminopeptidase B (975 aa).

Basic and acidic residues predominate over residues 1 to 20; it reads MAEHGHNMWEEEPSKGRDSL. The tract at residues 1-111 is disordered; the sequence is MAEHGHNMWE…LSAASGSAGK (111 aa). At 1-125 the chain is on the cytoplasmic side; that stretch reads MAEHGHNMWE…YRMMDRGLRR (125 aa). The segment covering 22-31 has biased composition (low complexity); sequence SDSSASTTSL. A compositionally biased stretch (acidic residues) spans 68–84; the sequence is LDDEDPLKDEASGDYDL. Residues 126–146 form a helical; Signal-anchor for type II membrane protein membrane-spanning segment; the sequence is VLIIASLVFVTAWVGGLFIYI. Over 147–975 the chain is Vacuolar; the sequence is SHKSYLHGSE…IDNAKPQGKR (829 aa). Asn-207, Asn-397, and Asn-622 each carry an N-linked (GlcNAc...) asparagine glycan. The active-site Charge relay system is Ser-826. Asn-885 carries N-linked (GlcNAc...) asparagine glycosylation. Catalysis depends on charge relay system residues Asp-903 and His-936.

The protein belongs to the peptidase S9B family.

The protein resides in the vacuole membrane. It carries out the reaction Release of an N-terminal dipeptide, Xaa-Yaa-|-Zaa-, from a polypeptide, preferentially when Yaa is Pro, provided Zaa is neither Pro nor hydroxyproline.. In terms of biological role, type IV dipeptidyl-peptidase which removes N-terminal dipeptides sequentially from polypeptides having unsubstituted N-termini provided that the penultimate residue is proline. The protein is Probable dipeptidyl-aminopeptidase B (DAPB) of Grosmannia clavigera (strain kw1407 / UAMH 11150) (Blue stain fungus).